The following is a 219-amino-acid chain: Probable nicotinate-nucleotide adenylyltransferase (219 aa).

The protein belongs to the NadD family.

It catalyses the reaction nicotinate beta-D-ribonucleotide + ATP + H(+) = deamido-NAD(+) + diphosphate. The protein operates within cofactor biosynthesis; NAD(+) biosynthesis; deamido-NAD(+) from nicotinate D-ribonucleotide: step 1/1. Its function is as follows. Catalyzes the reversible adenylation of nicotinate mononucleotide (NaMN) to nicotinic acid adenine dinucleotide (NaAD). This Enterococcus faecalis (strain ATCC 700802 / V583) protein is Probable nicotinate-nucleotide adenylyltransferase.